The primary structure comprises 274 residues: Protein RecA (274 aa).

43 to 50 (GPESSGKT) provides a ligand contact to ATP.

The protein belongs to the RecA family.

The protein localises to the cytoplasm. Functionally, can catalyze the hydrolysis of ATP in the presence of single-stranded DNA, the ATP-dependent uptake of single-stranded DNA by duplex DNA, and the ATP-dependent hybridization of homologous single-stranded DNAs. It interacts with LexA causing its activation and leading to its autocatalytic cleavage. The chain is Protein RecA from Neisseria flavescens.